We begin with the raw amino-acid sequence, 598 residues long: uncharacterized protein (598 aa).

Residues 1-19 (MSVPLRFSTPSSSPSASDN) show a composition bias toward low complexity. 3 disordered regions span residues 1–54 (MSVP…MRPK), 139–176 (QKNQ…PNWK), and 194–279 (EAQL…ITMP). At 1–313 (MSVPLRFSTP…CKIRHFFREG (313 aa)) the chain is on the cytoplasmic side. Over residues 30 to 48 (ELDTFNTTDVPRRVNTTKA) the composition is skewed to polar residues. Positions 147–165 (RANSRVNSRANSRANSSVS) are enriched in low complexity. Composition is skewed to polar residues over residues 218–242 (FSLQ…SSAI) and 255–276 (PRNN…SQDI). The chain crosses the membrane as a helical span at residues 314–334 (FAEFLGTLVLVVFGVGSNLQA). Over 335–346 (TVTNGAGGSFES) the chain is Extracellular. The helical transmembrane segment at 347–367 (LSFAWGFGCMLGVYIAGGISG) threads the bilayer. Over 368–388 (GHVNPAVTISLAIFRKFPWYK) the chain is Cytoplasmic. The NPA 1 signature appears at 371-373 (NPA). Residues 389–409 (VPIYIFFQIWGAFFGGALAYG) traverse the membrane as a helical segment. Residues 410-444 (YHWSSITEFEGGKDIRTPATGGCLYTNPKPYVTWR) lie on the Extracellular side of the membrane. The helical transmembrane segment at 445–465 (NAFFDEFIGTAVLVGCLFAIL) threads the bilayer. The Cytoplasmic segment spans residues 466 to 473 (DDTNSPPT). Residues 474 to 494 (QGMTAFIVGLLIAAIGMALGY) traverse the membrane as a helical segment. Over 495–532 (QTSFTLNPARDLGPRMFAWWIGYGPHSFHLYHWWWTWG) the chain is Extracellular. The NPA 2 signature appears at 501 to 503 (NPA). The helical transmembrane segment at 533 to 553 (AWGGTIGGGIAGGLIYDLVIF) threads the bilayer. Over 554-598 (TGPESPLNYPDNGFIDKKVHQITAKFEKEEEVENLEKTDSPIENN) the chain is Cytoplasmic.

This sequence belongs to the MIP/aquaporin (TC 1.A.8) family.

The protein localises to the membrane. This is an uncharacterized protein from Schizosaccharomyces pombe (strain 972 / ATCC 24843) (Fission yeast).